Consider the following 282-residue polypeptide: NADPH-dependent 7-cyano-7-deazaguanine reductase (282 aa).

88–90 (IES) lines the substrate pocket. 90–91 (SK) contributes to the NADPH binding site. Cys190 serves as the catalytic Thioimide intermediate. The Proton donor role is filled by Asp197. 229–230 (HE) is a binding site for substrate. Position 258–259 (258–259 (RG)) interacts with NADPH.

It belongs to the GTP cyclohydrolase I family. QueF type 2 subfamily. In terms of assembly, homodimer.

The protein resides in the cytoplasm. The enzyme catalyses 7-aminomethyl-7-carbaguanine + 2 NADP(+) = 7-cyano-7-deazaguanine + 2 NADPH + 3 H(+). It functions in the pathway tRNA modification; tRNA-queuosine biosynthesis. Functionally, catalyzes the NADPH-dependent reduction of 7-cyano-7-deazaguanine (preQ0) to 7-aminomethyl-7-deazaguanine (preQ1). This Escherichia coli O81 (strain ED1a) protein is NADPH-dependent 7-cyano-7-deazaguanine reductase.